A 155-amino-acid chain; its full sequence is Snaclec agkicetin-C subunit alpha (155 aa).

The signal sequence occupies residues 1–23 (MGRFIFVSFGLLVVFLSLSGTAA). 3 disulfide bridges follow: cysteine 25–cysteine 36, cysteine 53–cysteine 149, and cysteine 124–cysteine 141. Positions 32–150 (YIRFCYQPFK…CGLKHVFMCK (119 aa)) constitute a C-type lectin domain.

Belongs to the snaclec family. In terms of assembly, heterodimer of subunits alpha and beta; disulfide-linked. As to expression, expressed by the venom gland.

It is found in the secreted. Is a potent glycoprotein Ibalpha (GP1BA) antagonist. Concentration-dependently inhibits botrocetin-, ristocetin- and low dose thrombin-induced platelet aggregation. Inhibits platelet adhesion only through inhibiting the vWF interaction with GP1BA, but has minimal effect on other platelet receptors, such as alpha-IIb/beta-3 (ITGA2B/ITGB3) or alpha-2/beta-1 (ITGA2/ITGB1). Causes an instant severe thrombocytopenia in rats and is not lethal to mice. This is Snaclec agkicetin-C subunit alpha from Deinagkistrodon acutus (Hundred-pace snake).